Here is a 403-residue protein sequence, read N- to C-terminus: RILP-like protein 1 (403 aa).

Ser7 carries the post-translational modification Phosphoserine. Residues 10–97 (AAESALEKNV…RLERMDRIEK (88 aa)) enclose the RH1 domain. Residue Cys47 is modified to S-nitrosocysteine. Residues 76 to 265 (ELDELRLELD…GELNQNGEEE (190 aa)) adopt a coiled-coil conformation. In terms of domain architecture, RH2 spans 291-356 (RPRFTLQELR…PQPESGIKRL (66 aa)). The segment at 329–348 (EEENQIPQPPPIAHPRMSPQ) is disordered.

Belongs to the RILPL family. In terms of assembly, interacts (when S-nitrosylated) with GAPDH. Interacts with RAB8A; interaction is dependent on the phosphorylation of 'Thr-72' of RAB8A. Interacts with RAB10 and RAB12; the interaction is dependent on the phosphorylation of 'Thr-73' of RAB10, and 'Ser-105' of RAB12. S-nitrosylation is required for the interaction with GAPDH.

Its subcellular location is the cytoplasm. It is found in the cytosol. It localises to the cytoskeleton. The protein localises to the microtubule organizing center. The protein resides in the centrosome. Its subcellular location is the centriole. It is found in the cilium basal body. Plays a role in the regulation of cell shape and polarity. Plays a role in cellular protein transport, including protein transport away from primary cilia. Neuroprotective protein, which acts by sequestring GAPDH in the cytosol and prevent the apoptotic function of GAPDH in the nucleus. Competes with SIAH1 for binding GAPDH. Does not regulate lysosomal morphology and distribution. Binds to RAB10 following LRRK2-mediated RAB10 phosphorylation which leads to inhibition of ciliogenesis. This chain is RILP-like protein 1 (RILPL1), found in Bos taurus (Bovine).